The primary structure comprises 402 residues: 1-deoxy-D-xylulose 5-phosphate reductoisomerase (402 aa).

Thr-25, Gly-26, Ser-27, Val-28, Arg-52, Asn-53, and Asn-136 together coordinate NADPH. Residue Lys-137 participates in 1-deoxy-D-xylulose 5-phosphate binding. Glu-138 serves as a coordination point for NADPH. Asp-162 serves as a coordination point for Mn(2+). Residues Ser-163, Glu-164, Ser-188, and His-211 each coordinate 1-deoxy-D-xylulose 5-phosphate. Residue Glu-164 coordinates Mn(2+). Gly-217 is a binding site for NADPH. 1-deoxy-D-xylulose 5-phosphate is bound by residues Ser-224, Asn-229, Lys-230, and Glu-233. Glu-233 is a Mn(2+) binding site.

Belongs to the DXR family. The cofactor is Mg(2+). Mn(2+) serves as cofactor.

The catalysed reaction is 2-C-methyl-D-erythritol 4-phosphate + NADP(+) = 1-deoxy-D-xylulose 5-phosphate + NADPH + H(+). It participates in isoprenoid biosynthesis; isopentenyl diphosphate biosynthesis via DXP pathway; isopentenyl diphosphate from 1-deoxy-D-xylulose 5-phosphate: step 1/6. In terms of biological role, catalyzes the NADPH-dependent rearrangement and reduction of 1-deoxy-D-xylulose-5-phosphate (DXP) to 2-C-methyl-D-erythritol 4-phosphate (MEP). This is 1-deoxy-D-xylulose 5-phosphate reductoisomerase from Rhodospirillum centenum (strain ATCC 51521 / SW).